Reading from the N-terminus, the 69-residue chain is Large ribosomal subunit protein bL31 (69 aa).

Residues Cys-16, Cys-18, Cys-38, and Cys-41 each coordinate Zn(2+).

This sequence belongs to the bacterial ribosomal protein bL31 family. Type A subfamily. As to quaternary structure, part of the 50S ribosomal subunit. Zn(2+) is required as a cofactor.

Functionally, binds the 23S rRNA. The polypeptide is Large ribosomal subunit protein bL31 (Thermobifida fusca (strain YX)).